Consider the following 301-residue polypeptide: uncharacterized protein (301 aa).

A divalent metal cation contacts are provided by E146, E148, and D177.

Belongs to the FAH family.

This is an uncharacterized protein from Staphylococcus haemolyticus (strain JCSC1435).